The primary structure comprises 471 residues: MILKKVWGSVWNRSNSGKDLVNHQRAIDVPPLLLSSSSSLGAFDQLPMDILVQILMMMEPKDAVKLGLTCKAWKCVASGNRLWIFYLQCSQEPWDSIFFAETSLRSGYPLRMISSQSGELSFMHIYSQRAQVPGSIIIDGGSGYCKFGWSKYASPSGRSATFLEFGNIESPIYARLQQFFATIFTRMQVKPSMQPIVVSLPLCHFDDTESAKASRRQLKTAIFNVLFDMNVPAVCAVNQAVLALYAARRTSGIVVNIGFQVITILPILHGKVMRQVGVEVIGFGALKLTGFLKEKMQENNISFQSLYTVRTLKEKLCYVALDYKAELSKDTQASVEVSGEGWFTLSKERFQTGEILFQPRLAGMRAMSLHQAVSLCMDHCDAAGLTGDDSWFKTVVLTGGSACLPGLSERLERELQDHLPSSISNGIRVIPPPYGVDTSWHGAKLISNLSIFPGPWCITRKQFRRKSRLMW.

Positions Leu40–Tyr86 constitute an F-box domain. An ATP-binding site is contributed by Asn256 to Phe259.

This sequence belongs to the actin family. Plant ARP8 subfamily. As to expression, ubiquitously expressed in all organs and cell types. Higher expression in seedlings.

It is found in the nucleus. The protein resides in the nucleolus. It localises to the cytoplasm. This Arabidopsis thaliana (Mouse-ear cress) protein is Actin-related protein 8 (ARP8).